The primary structure comprises 156 residues: Transcription antitermination protein NusB (156 aa).

The protein belongs to the NusB family.

In terms of biological role, involved in transcription antitermination. Required for transcription of ribosomal RNA (rRNA) genes. Binds specifically to the boxA antiterminator sequence of the ribosomal RNA (rrn) operons. The sequence is that of Transcription antitermination protein NusB from Xanthomonas oryzae pv. oryzae (strain MAFF 311018).